The sequence spans 92 residues: Small ribosomal subunit protein uS17 (92 aa).

It belongs to the universal ribosomal protein uS17 family. Part of the 30S ribosomal subunit.

Functionally, one of the primary rRNA binding proteins, it binds specifically to the 5'-end of 16S ribosomal RNA. The sequence is that of Small ribosomal subunit protein uS17 from Bordetella petrii (strain ATCC BAA-461 / DSM 12804 / CCUG 43448).